The following is a 581-amino-acid chain: Meiotic PUF family protein 1 (581 aa).

In terms of domain architecture, PUM-HD spans Phe225–Lys580. 8 Pumilio repeats span residues Thr291–Tyr326, Phe327–Glu362, Glu363–Asp398, Lys403–Asp438, Glu439–Asn474, Ser475–Lys510, Glu518–Glu554, and His555–Ser581.

RNA-binding protein essential for meiotic progression. The chain is Meiotic PUF family protein 1 (mpf1) from Schizosaccharomyces pombe (strain 972 / ATCC 24843) (Fission yeast).